A 78-amino-acid polypeptide reads, in one-letter code: uncharacterized protein (78 aa).

This is an uncharacterized protein from Bacillus subtilis (strain 168).